We begin with the raw amino-acid sequence, 198 residues long: MORN repeat-containing protein 4 homolog (198 aa).

Ala-2 carries the post-translational modification N-acetylalanine. The span at Gln-23–Gln-45 shows a compositional bias: low complexity. The segment at Gln-23–Tyr-46 is disordered. MORN repeat units lie at residues Tyr-64 to Arg-87, Tyr-88 to Ala-109, Tyr-111 to Met-132, and Tyr-134 to Asp-153.

As to quaternary structure, interacts with ninaC. In terms of processing, phosphorylated under dark conditions and is dephosphorylated by light exposure. Retina. Expressed primarily in the phototransducing compartment of photoreceptor cells, the rhabdomeres and its expression is dependent on ninaC protein (at protein level).

It is found in the membrane. The protein resides in the cell projection. The protein localises to the rhabdomere membrane. Functionally, plays a role in promoting axonal degeneration following neuronal injury by toxic insult or trauma. Organizes rhabdomeric components to suppress random activation of the phototransduction cascade and thus increases the signaling fidelity of dark-adapted photoreceptors. The rtp/ninaC complex is required for stability of inad and inac and the normal termination of phototransduction in the retina. The sequence is that of MORN repeat-containing protein 4 homolog from Drosophila melanogaster (Fruit fly).